Here is a 452-residue protein sequence, read N- to C-terminus: MDRRIFGLENEYGVTCVFRGQRRLSPDEVARYLFRRVVSWGRSSNVFLKNGARLYLDVGSHPEYATPECDSVPDLVTHDKAGERILEGLLVEAERRLREEGIAGDIHLFKNNTDSAGNSYGCHENYLVGRHGEFSKLADVLVPFLVSRQILCGAGKVLQTPRGAVYCISQRAEHIWESVSSATTRSRPIINTRDEPHADAERFRRLHVIVGDSNMSETTMLLKLGSTDLVLRMIEAGVMLRDMTLENPIRAIREVSHDMTCQRKIKLANGREVSALDIQREYYSKAVEFVERRGGDEVAKRVLDLWGRTLLAIETDDLELVAREIDWVTKYVLIERFRHKHGLSLASPRVAELDLKYHDIHRDRGLYYRMERAGLVERVTRDLDVFEAKSRPPQTTRARLRGEFIKRAQEKRRDFTVDWVHLKLNDQAQRTVLCKDPFRSVDDRVDKLIASM.

A Mg(2+)-binding site is contributed by E9. R53 provides a ligand contact to ATP. Mg(2+) is bound at residue Y55. The Proton acceptor role is filled by D57. E63 serves as a coordination point for Mg(2+). Positions 66 and 419 each coordinate ATP.

The protein belongs to the Pup ligase/Pup deamidase family. Pup-conjugating enzyme subfamily.

It catalyses the reaction ATP + [prokaryotic ubiquitin-like protein]-L-glutamate + [protein]-L-lysine = ADP + phosphate + N(6)-([prokaryotic ubiquitin-like protein]-gamma-L-glutamyl)-[protein]-L-lysine.. It functions in the pathway protein degradation; proteasomal Pup-dependent pathway. It participates in protein modification; protein pupylation. Its function is as follows. Catalyzes the covalent attachment of the prokaryotic ubiquitin-like protein modifier Pup to the proteasomal substrate proteins, thereby targeting them for proteasomal degradation. This tagging system is termed pupylation. The ligation reaction involves the side-chain carboxylate of the C-terminal glutamate of Pup and the side-chain amino group of a substrate lysine. The polypeptide is Pup--protein ligase (Frankia alni (strain DSM 45986 / CECT 9034 / ACN14a)).